The chain runs to 381 residues: Magnesium transporter MRS2-I (381 aa).

2 consecutive transmembrane segments (helical) span residues 316–336 (LFLS…GIFG) and 353–373 (WVVL…VAYA). Residues 336 to 338 (GMN) carry the Required for magnesium transport activity motif.

Belongs to the CorA metal ion transporter (MIT) (TC 1.A.35.5) family.

Its subcellular location is the membrane. Functionally, magnesium transporter that may mediate the influx of magnesium. This chain is Magnesium transporter MRS2-I (MRS2-I), found in Oryza sativa subsp. indica (Rice).